Here is a 186-residue protein sequence, read N- to C-terminus: Ribosome-recycling factor (186 aa).

The protein belongs to the RRF family.

It is found in the cytoplasm. Responsible for the release of ribosomes from messenger RNA at the termination of protein biosynthesis. May increase the efficiency of translation by recycling ribosomes from one round of translation to another. In Rickettsia canadensis (strain McKiel), this protein is Ribosome-recycling factor.